Here is a 246-residue protein sequence, read N- to C-terminus: Ubiquinone biosynthesis O-methyltransferase (246 aa).

Residues arginine 44, glycine 63, aspartate 84, and methionine 128 each contribute to the S-adenosyl-L-methionine site.

Belongs to the methyltransferase superfamily. UbiG/COQ3 family.

The enzyme catalyses a 3-demethylubiquinol + S-adenosyl-L-methionine = a ubiquinol + S-adenosyl-L-homocysteine + H(+). The catalysed reaction is a 3-(all-trans-polyprenyl)benzene-1,2-diol + S-adenosyl-L-methionine = a 2-methoxy-6-(all-trans-polyprenyl)phenol + S-adenosyl-L-homocysteine + H(+). Its pathway is cofactor biosynthesis; ubiquinone biosynthesis. Its function is as follows. O-methyltransferase that catalyzes the 2 O-methylation steps in the ubiquinone biosynthetic pathway. This is Ubiquinone biosynthesis O-methyltransferase from Xylella fastidiosa (strain 9a5c).